Consider the following 285-residue polypeptide: Acetyl-coenzyme A carboxylase carboxyl transferase subunit beta (285 aa).

One can recognise a CoA carboxyltransferase N-terminal domain in the interval 24-285 (GLWYKSPTGK…DLIQNQPVRA (262 aa)).

Belongs to the AccD/PCCB family. Acetyl-CoA carboxylase is a heterohexamer composed of biotin carboxyl carrier protein (AccB), biotin carboxylase (AccC) and two subunits each of ACCase subunit alpha (AccA) and ACCase subunit beta (AccD).

The protein resides in the cytoplasm. It catalyses the reaction N(6)-carboxybiotinyl-L-lysyl-[protein] + acetyl-CoA = N(6)-biotinyl-L-lysyl-[protein] + malonyl-CoA. The protein operates within lipid metabolism; malonyl-CoA biosynthesis; malonyl-CoA from acetyl-CoA: step 1/1. Its function is as follows. Component of the acetyl coenzyme A carboxylase (ACC) complex. Biotin carboxylase (BC) catalyzes the carboxylation of biotin on its carrier protein (BCCP) and then the CO(2) group is transferred by the transcarboxylase to acetyl-CoA to form malonyl-CoA. This chain is Acetyl-coenzyme A carboxylase carboxyl transferase subunit beta, found in Christiangramia forsetii (strain DSM 17595 / CGMCC 1.15422 / KT0803) (Gramella forsetii).